A 212-amino-acid chain; its full sequence is MNIIIMIIIAYLLGSIQTGLWIGKYFYQVNLRQHGSGNTGTTNTFRILGVKAGIVTLTIDILKGTLATLIPIILGITTVSPFFIGFFAIIGHTFPIFAQFKGGKAVATSAGVLLGFAPSFFLYLLVIFLLTLYLFSMISLSSITVAVVGILSVLIFPLVGFILTDYDWIFTTVVILMALTIIIRHQDNIKRIRKRQENLVPFGLNLSKQKNK.

5 helical membrane passes run isoleucine 3–glycine 23, isoleucine 70–isoleucine 90, alanine 110–leucine 130, isoleucine 143–leucine 163, and threonine 164–arginine 184.

It belongs to the PlsY family. In terms of assembly, probably interacts with PlsX.

It localises to the cell membrane. The catalysed reaction is an acyl phosphate + sn-glycerol 3-phosphate = a 1-acyl-sn-glycero-3-phosphate + phosphate. The protein operates within lipid metabolism; phospholipid metabolism. Catalyzes the transfer of an acyl group from acyl-phosphate (acyl-PO(4)) to glycerol-3-phosphate (G3P) to form lysophosphatidic acid (LPA). This enzyme utilizes acyl-phosphate as fatty acyl donor, but not acyl-CoA or acyl-ACP. The protein is Glycerol-3-phosphate acyltransferase of Streptococcus agalactiae serotype III (strain NEM316).